An 838-amino-acid chain; its full sequence is Tuftelin-interacting protein 11 (838 aa).

A compositionally biased stretch (basic and acidic residues) spans 1–13; the sequence is MSLSHLYRDGEGH. Positions 1–51 are required for interaction with DHX15; that stretch reads MSLSHLYRDGEGHLDDDDDDERENFEITDWDLQNEFNPNRQRHWQTKEEAT. Disordered stretches follow at residues 1–74 and 86–137; these read MSLS…RARD and LKKG…SGGT. Position 2 is a phosphoserine (Ser2). Residues 14 to 29 are compositionally biased toward acidic residues; it reads LDDDDDDERENFEITD. Over residues 45–65 the composition is skewed to basic and acidic residues; it reads QTKEEATYGVWAERDSDEERP. 3 positions are modified to phosphoserine: Ser60, Ser96, and Ser99. Residues 92 to 101 are compositionally biased toward acidic residues; that stretch reads EEADSEDSDA. Positions 102-117 are enriched in basic and acidic residues; that stretch reads EEKPVKQEDFPKDLGP. Ser145 carries the phosphoserine modification. The 47-residue stretch at 150-196 folds into the G-patch domain; that stretch reads TKGIGQKLLQKMGYVPGRGLGKNAQGIINPIEAKQRKGKGAVGAYGS. The disordered stretch occupies residues 193 to 237; sequence AYGSERTTQSLQDFPVADSEEEAEEEFQKELSQWRKDPSGSKKKP. A Phosphoserine modification is found at Ser211. Positions 218–232 are enriched in basic and acidic residues; that stretch reads EFQKELSQWRKDPSG. A Nuclear localization signal motif is present at residues 701 to 706; the sequence is VKDKFN. The tract at residues 711–735 is required for nuclear speckle localization; sequence IMNRAVSSNVGAYMQPGARENIAYL.

Belongs to the TFP11/STIP family. As to quaternary structure, identified in the spliceosome C complex. Found in the Intron Large (IL) complex, a post-mRNA release spliceosomal complex containing the excised intron, U2, U5 and U6 snRNPs, and splicing factors. Interacts with TUFT1. Interacts with DHX15; indicative for a recruitment of DHX15 to the IL complex. Interacts with GCFC2. In terms of tissue distribution, widely expressed. In tooth it is expressed in ameloblasts and odontoblasts.

The protein localises to the cytoplasm. Its subcellular location is the nucleus. Involved in pre-mRNA splicing, specifically in spliceosome disassembly during late-stage splicing events. Intron turnover seems to proceed through reactions in two lariat-intron associated complexes termed Intron Large (IL) and Intron Small (IS). In cooperation with DHX15 seems to mediate the transition of the U2, U5 and U6 snRNP-containing IL complex to the snRNP-free IS complex leading to efficient debranching and turnover of excised introns. May play a role in the differentiation of ameloblasts and odontoblasts or in the forming of the enamel extracellular matrix. This Mus musculus (Mouse) protein is Tuftelin-interacting protein 11 (Tfip11).